The sequence spans 304 residues: Acetylglutamate kinase (304 aa).

Residues 64–65 (GG), Arg-86, and Asn-181 each bind substrate.

Belongs to the acetylglutamate kinase family. ArgB subfamily.

The protein localises to the plastid. Its subcellular location is the chloroplast. It catalyses the reaction N-acetyl-L-glutamate + ATP = N-acetyl-L-glutamyl 5-phosphate + ADP. Its pathway is amino-acid biosynthesis; L-arginine biosynthesis; N(2)-acetyl-L-ornithine from L-glutamate: step 2/4. Catalyzes the ATP-dependent phosphorylation of N-acetyl-L-glutamate. This chain is Acetylglutamate kinase, found in Cyanidium caldarium (Red alga).